Here is a 200-residue protein sequence, read N- to C-terminus: Ras-related protein Rab-10 (200 aa).

Positions 18, 19, 20, 21, 22, 23, 24, 35, 36, 40, and 41 each coordinate GTP. T23 serves as a coordination point for Mg(2+). Short sequence motifs (switch) lie at residues 32 to 46 (DAFN…EIDF) and 64 to 81 (DTAG…YYRG). Residues T41 and D64 each contribute to the Mg(2+) site. G67 serves as a coordination point for GTP. T73 carries the post-translational modification Phosphothreonine. An N6-acetyllysine modification is found at K102. A Glycyl lysine isopeptide (Lys-Gly) (interchain with G-Cter in ubiquitin) cross-link involves residue K102. 4 residues coordinate GTP: N122, K123, D125, and M126. Residue K136 forms a Glycyl lysine isopeptide (Lys-Gly) (interchain with G-Cter in ubiquitin) linkage. Positions 152, 153, and 154 each coordinate GTP. K154 is covalently cross-linked (Glycyl lysine isopeptide (Lys-Gly) (interchain with G-Cter in ubiquitin)). S-geranylgeranyl cysteine attachment occurs at residues C199 and C200.

The protein belongs to the small GTPase superfamily. Rab family. As to quaternary structure, interacts with MYO5A; mediates the transport to the plasma membrane of SLC2A4/GLUT4 storage vesicles. Interacts with GDI1 and with GDI2; negatively regulates RAB10 association with membranes and activation. Interacts (GDP-bound form) with LLGL1; the interaction is direct and promotes RAB10 association with membranes and activation through competition with the Rab inhibitor GDI1. Interacts with EXOC4; probably associates with the exocyst. Interacts (GTP-bound form) with MICALCL, MICAL1, MICAL3, EHBP1 and EHBP1L1; at least in case of MICAL1 two molecules of RAB10 can bind to one molecule of MICAL1. Interacts with TBC1D13. Interacts with SEC16A. Interacts with CHM. Interacts with LRRK2; interaction facilitates phosphorylation of Thr-73. Interacts with RILPL1 and RILPL2 when phosphorylated on Thr-73. Interacts with TBC1D21. Interacts with MARCKS. The cofactor is Mg(2+). Phosphorylation of Thr-73 in the switch II region by LRRK2 prevents the association of RAB regulatory proteins, including CHM and RAB GDP dissociation inhibitors GDI1 and GDI2. Phosphorylation of Thr-73 by LRRK2 is stimulated by RAB29 and RAB32. Phosphorylation by LRRK2 is required for localization to stressed lysosomes. Highest levels in neural and muscle tissues.

Its subcellular location is the cytoplasmic vesicle membrane. The protein resides in the golgi apparatus. The protein localises to the trans-Golgi network membrane. It is found in the endosome membrane. It localises to the recycling endosome membrane. Its subcellular location is the cytoplasmic vesicle. The protein resides in the phagosome membrane. The protein localises to the cell projection. It is found in the cilium. It localises to the endoplasmic reticulum membrane. Its subcellular location is the cytoplasm. The protein resides in the perinuclear region. The protein localises to the lysosome. It carries out the reaction GTP + H2O = GDP + phosphate + H(+). Regulated by guanine nucleotide exchange factors (GEFs) DENND4C and RABIF which promote the exchange of bound GDP for free GTP. Regulated by GTPase activating proteins (GAPs) including TBC1D21 which increase the GTP hydrolysis activity. Inhibited by GDP dissociation inhibitors GDI1 and GDI2 which prevent Rab-GDP dissociation. Its function is as follows. The small GTPases Rab are key regulators of intracellular membrane trafficking, from the formation of transport vesicles to their fusion with membranes. Rabs cycle between an inactive GDP-bound form and an active GTP-bound form that is able to recruit to membranes different set of downstream effectors directly responsible for vesicle formation, movement, tethering and fusion. That Rab is mainly involved in the biosynthetic transport of proteins from the Golgi to the plasma membrane. Regulates, for instance, SLC2A4/GLUT4 glucose transporter-enriched vesicles delivery to the plasma membrane. In parallel, it regulates the transport of TLR4, a toll-like receptor to the plasma membrane and therefore may be important for innate immune response. Also plays a specific role in asymmetric protein transport to the plasma membrane. In neurons, it is involved in axonogenesis through regulation of vesicular membrane trafficking toward the axonal plasma membrane. In epithelial cells, it regulates transport from the Golgi to the basolateral membrane. May play a role in the basolateral recycling pathway and in phagosome maturation. May play a role in endoplasmic reticulum dynamics and morphology controlling tubulation along microtubules and tubules fusion. Together with LRRK2, RAB8A, and RILPL1, it regulates ciliogenesis. When phosphorylated by LRRK2 on Thr-73, it binds RILPL1 and inhibits ciliogenesis. Participates in the export of a subset of neosynthesized proteins through a Rab8-Rab10-Rab11-dependent endososomal export route. Targeted to and stabilized on stressed lysosomes through LRRK2 phosphorylation where it promotes the extracellular release of lysosomal content through EHBP1 and EHNP1L1 effector proteins. The polypeptide is Ras-related protein Rab-10 (Rattus norvegicus (Rat)).